Reading from the N-terminus, the 293-residue chain is Mating-type protein A-1 (293 aa).

The alpha box DNA-binding region spans 42–97 (AAKKKVNGFMGFRSYYSPLFSQLPQKERSPFMTILWQHDPFHNEWDFMCSVYSSIR).

It belongs to the MATALPHA1 family.

The protein resides in the nucleus. Its function is as follows. Mating type proteins are sequence specific DNA-binding proteins that act as master switches in yeast differentiation by controlling gene expression in a cell type-specific fashion. Transcriptional activator that induces the transcription of A-specific genes like mating factor ccg-4. Required for mating as an A-cell and for blocking of heterokaryon formation (vegetative incompatibility). The sequence is that of Mating-type protein A-1 (mtA-1) from Neurospora crassa (strain ATCC 24698 / 74-OR23-1A / CBS 708.71 / DSM 1257 / FGSC 987).